Here is a 517-residue protein sequence, read N- to C-terminus: Pseudaminic acid cytidylyltransferase and UDP-2,4-diacetamido-2,4,6-trideoxy-beta-L-altropyranose hydrolase (517 aa).

Residues 1–208 form a pseudaminic acid cytidylyltransferase region; sequence MRAIAIVLAR…ELSPLEVQDI (208 aa). Residues 209-517 are UDP-2,4-diacetamido-2,4,6-trideoxy-beta-L-altropyranose hydrolase; the sequence is AHFRRFRISQ…EGALREFLEI (309 aa). Catalysis depends on His-244, which acts as the Proton acceptor; for UDP-2,4-diacetamido-2,4,6-trideoxy-beta-L-altropyranose hydrolase activity.

The protein in the N-terminal section; belongs to the CMP-NeuNAc synthase family. It in the C-terminal section; belongs to the PseG family. As to quaternary structure, monomer. The cofactor is Mg(2+).

The catalysed reaction is UDP-2,4-diacetamido-2,4,6-trideoxy-beta-L-altrose + H2O = 2,4-diacetamido-2,4,6-trideoxy-beta-L-altrose + UDP + H(+). It catalyses the reaction pseudaminate + CTP = CMP-pseudaminate + diphosphate. In terms of biological role, catalyzes the fourth and sixth steps in the biosynthesis of pseudaminic acid, a sialic-acid-like sugar that is used to modify flagellin. The C-terminus mediates the fourth step of the pathway and catalyzes the removal of UDP from C-1 of UDP-2,4-diacetamido-2,4,6-trideoxy-beta-L-altropyranose forming 2,4-diacetamido-2,4,6-trideoxy-beta-L-altropyranose. The N-terminal part mediates the last step of the pathway by mediating activation of pseudaminic acid with CMP by forming CMP-pseudaminic acid. In Helicobacter pylori (strain ATCC 700392 / 26695) (Campylobacter pylori), this protein is Pseudaminic acid cytidylyltransferase and UDP-2,4-diacetamido-2,4,6-trideoxy-beta-L-altropyranose hydrolase.